The chain runs to 461 residues: Argininosuccinate lyase (461 aa).

The protein belongs to the lyase 1 family. Argininosuccinate lyase subfamily.

The protein resides in the cytoplasm. It catalyses the reaction 2-(N(omega)-L-arginino)succinate = fumarate + L-arginine. The protein operates within amino-acid biosynthesis; L-arginine biosynthesis; L-arginine from L-ornithine and carbamoyl phosphate: step 3/3. This Chloroflexus aurantiacus (strain ATCC 29366 / DSM 635 / J-10-fl) protein is Argininosuccinate lyase.